Here is a 20-residue protein sequence, read N- to C-terminus: Neurotoxin BmK 18(2) (20 aa).

In terms of domain architecture, LCN-type CS-alpha/beta spans 2 to 20 (RDAYIAEDYDCVYHCARDA).

This sequence belongs to the long (4 C-C) scorpion toxin superfamily. Sodium channel inhibitor family. Alpha subfamily. Expressed by the venom gland.

It localises to the secreted. Its function is as follows. Binds to sodium channels (Nav) and inhibits the inactivation of the activated channels, thereby blocking neuronal transmission. This chain is Neurotoxin BmK 18(2), found in Olivierus martensii (Manchurian scorpion).